A 787-amino-acid chain; its full sequence is uncharacterized protein (787 aa).

A signal peptide spans Met-1–Ala-22. A lipid anchor (N-palmitoyl cysteine) is attached at Cys-23. The S-diacylglycerol cysteine moiety is linked to residue Cys-23. Disordered regions lie at residues Ser-178–Ile-270 and Lys-473–Ser-495. The span at Val-181 to Pro-208 shows a compositional bias: polar residues. Over residues Ala-209–Ala-219 the composition is skewed to basic and acidic residues. A compositionally biased stretch (low complexity) spans Ser-242–Asp-261.

The protein belongs to the MG185/MG260 family.

It is found in the cell membrane. This is an uncharacterized protein from Mycoplasma pneumoniae (strain ATCC 29342 / M129 / Subtype 1) (Mycoplasmoides pneumoniae).